A 550-amino-acid chain; its full sequence is Hydroxylamine reductase (550 aa).

The [2Fe-2S] cluster site is built by cysteine 3, cysteine 6, cysteine 18, and cysteine 25. Positions 249, 273, 317, 405, 433, 458, 492, and 494 each coordinate hybrid [4Fe-2O-2S] cluster. Residue cysteine 405 is modified to Cysteine persulfide.

It belongs to the HCP family. [2Fe-2S] cluster is required as a cofactor. It depends on hybrid [4Fe-2O-2S] cluster as a cofactor.

It localises to the cytoplasm. It catalyses the reaction A + NH4(+) + H2O = hydroxylamine + AH2 + H(+). Functionally, catalyzes the reduction of hydroxylamine to form NH(3) and H(2)O. The protein is Hydroxylamine reductase of Escherichia coli (strain SMS-3-5 / SECEC).